Here is a 295-residue protein sequence, read N- to C-terminus: Bifunctional protein FolD 1 (295 aa).

Residues 165–167, I190, and I231 each bind NADP(+); that span reads GKS.

It belongs to the tetrahydrofolate dehydrogenase/cyclohydrolase family. Homodimer.

The enzyme catalyses (6R)-5,10-methylene-5,6,7,8-tetrahydrofolate + NADP(+) = (6R)-5,10-methenyltetrahydrofolate + NADPH. It catalyses the reaction (6R)-5,10-methenyltetrahydrofolate + H2O = (6R)-10-formyltetrahydrofolate + H(+). Its pathway is one-carbon metabolism; tetrahydrofolate interconversion. Its function is as follows. Catalyzes the oxidation of 5,10-methylenetetrahydrofolate to 5,10-methenyltetrahydrofolate and then the hydrolysis of 5,10-methenyltetrahydrofolate to 10-formyltetrahydrofolate. In Rhizorhabdus wittichii (strain DSM 6014 / CCUG 31198 / JCM 15750 / NBRC 105917 / EY 4224 / RW1) (Sphingomonas wittichii), this protein is Bifunctional protein FolD 1.